The chain runs to 220 residues: Adenylate kinase (220 aa).

An ATP-binding site is contributed by 10 to 15 (GAGKGT). Residues 30–59 (STGDMLRAAVKAGTPLGVEAKGYMDAGKLV) are NMP. Residues threonine 31, arginine 36, 57-59 (KLV), 85-88 (GFPR), and glutamine 92 contribute to the AMP site. The segment at 122-159 (GRRTHPASGRTYHVKFNPPKVEGHDDVTGEPLIQRDDD) is LID. ATP-binding positions include arginine 123 and 132 to 133 (TY). Positions 156 and 167 each coordinate AMP. Position 206 (glycine 206) interacts with ATP.

It belongs to the adenylate kinase family. Monomer.

The protein localises to the cytoplasm. It catalyses the reaction AMP + ATP = 2 ADP. The protein operates within purine metabolism; AMP biosynthesis via salvage pathway; AMP from ADP: step 1/1. Its function is as follows. Catalyzes the reversible transfer of the terminal phosphate group between ATP and AMP. Plays an important role in cellular energy homeostasis and in adenine nucleotide metabolism. The sequence is that of Adenylate kinase from Burkholderia lata (strain ATCC 17760 / DSM 23089 / LMG 22485 / NCIMB 9086 / R18194 / 383).